The chain runs to 663 residues: 4-hydroxy-3-methylbut-2-en-1-yl diphosphate synthase (flavodoxin) (663 aa).

The [4Fe-4S] cluster site is built by cysteine 568, cysteine 571, cysteine 602, and glutamate 609.

It belongs to the IspG family. The cofactor is [4Fe-4S] cluster.

The enzyme catalyses (2E)-4-hydroxy-3-methylbut-2-enyl diphosphate + oxidized [flavodoxin] + H2O + 2 H(+) = 2-C-methyl-D-erythritol 2,4-cyclic diphosphate + reduced [flavodoxin]. It functions in the pathway isoprenoid biosynthesis; isopentenyl diphosphate biosynthesis via DXP pathway; isopentenyl diphosphate from 1-deoxy-D-xylulose 5-phosphate: step 5/6. Converts 2C-methyl-D-erythritol 2,4-cyclodiphosphate (ME-2,4cPP) into 1-hydroxy-2-methyl-2-(E)-butenyl 4-diphosphate. This is 4-hydroxy-3-methylbut-2-en-1-yl diphosphate synthase (flavodoxin) from Leptospira borgpetersenii serovar Hardjo-bovis (strain JB197).